A 362-amino-acid chain; its full sequence is 3-dehydroquinate synthase (362 aa).

Residues 71–76, 105–109, 129–130, K142, K151, and 169–172 contribute to the NAD(+) site; these read DGERYK, GVIGD, TT, and CLKT. E184, H247, and H264 together coordinate Zn(2+).

It belongs to the sugar phosphate cyclases superfamily. Dehydroquinate synthase family. The cofactor is Co(2+). Zn(2+) serves as cofactor. NAD(+) is required as a cofactor.

It is found in the cytoplasm. The catalysed reaction is 7-phospho-2-dehydro-3-deoxy-D-arabino-heptonate = 3-dehydroquinate + phosphate. Its pathway is metabolic intermediate biosynthesis; chorismate biosynthesis; chorismate from D-erythrose 4-phosphate and phosphoenolpyruvate: step 2/7. Catalyzes the conversion of 3-deoxy-D-arabino-heptulosonate 7-phosphate (DAHP) to dehydroquinate (DHQ). In Salmonella arizonae (strain ATCC BAA-731 / CDC346-86 / RSK2980), this protein is 3-dehydroquinate synthase.